The following is a 534-amino-acid chain: High-affinity nicotinic acid transporter (534 aa).

The Extracellular segment spans residues 1 to 130; sequence MSNKFTMESP…DIHLVGTQYN (130 aa). The segment at 21-56 is disordered; the sequence is SPTNDGSEEKPTEVTFQEDEGHDASLHNRSHDKKSE. Residue serine 27 is modified to Phosphoserine. Residues 131–151 traverse the membrane as a helical segment; it reads TCVTVFFATYVLFDPIGTNLL. Residue lysine 152 is a topological domain, cytoplasmic. A helical membrane pass occupies residues 153–173; that stretch reads IMGPPLMMSICLTCFGAISLG. The Extracellular portion of the chain corresponds to 174-187; the sequence is TAWVKNYAQLIVVR. Residues 188–208 form a helical membrane-spanning segment; it reads LLLGAFEGMIYPAINMYLSVC. Residues 209–217 are Cytoplasmic-facing; that stretch reads YRREQYALR. The chain crosses the membrane as a helical span at residues 218–238; sequence FAFVFSAACLSSSFGGLIAYG. The Extracellular segment spans residues 239–250; sequence CSKISGSLKDWQ. Residues 251–271 traverse the membrane as a helical segment; that stretch reads YIYIVEGCISLGFVPFYAFGL. Residues 272–323 are Cytoplasmic-facing; it reads SKNLEDSWFFNKEEKEYISERYKTMNTFDPDEKFEWFQVWQAVKDVKTWASA. Residue lysine 283 forms a Glycyl lysine isopeptide (Lys-Gly) (interchain with G-Cter in ubiquitin) linkage. Residues 324-344 form a helical membrane-spanning segment; that stretch reads VALFGIDLTTFGLTVFLPIII. The Extracellular portion of the chain corresponds to 345-355; that stretch reads TSMGFTNVRAQ. The chain crosses the membrane as a helical span at residues 356 to 376; that stretch reads LMTVPIYFLTAIVFFICAVWS. The Cytoplasmic portion of the chain corresponds to 377 to 384; sequence DRIKLRSP. A helical membrane pass occupies residues 385 to 405; the sequence is FILGACLTTSIGIAIVLGSQV. Residues 406–410 are Extracellular-facing; it reads HGVRY. Residues 411 to 431 form a helical membrane-spanning segment; that stretch reads FGVYILCMGIYVNAACNCLWL. Residues 432–444 are Cytoplasmic-facing; it reads SGNTGNYFKRATA. The chain crosses the membrane as a helical span at residues 445–465; sequence LGINLFFGSGSGLVSGQIFVA. The Extracellular portion of the chain corresponds to 466-474; that stretch reads KDKPRYIKG. Residues 475–495 traverse the membrane as a helical segment; sequence LSISLAFQVFSIFMTVVQIFL. At 496–534 the chain is on the cytoplasmic side; sequence YKRENDKKKAIIDRCNELGEPIPYDERLSDKNPEFKYMY.

This sequence belongs to the major facilitator superfamily. Allantoate permease family.

Its subcellular location is the membrane. Functionally, involved in the uptake of nicotinic acid. The protein is High-affinity nicotinic acid transporter (TNA1) of Saccharomyces cerevisiae (strain ATCC 204508 / S288c) (Baker's yeast).